Consider the following 274-residue polypeptide: Reaction center protein L chain (274 aa).

The Cytoplasmic segment spans residues 2-32; it reads ALLSFERKYRVRGGTLIGGDLFDFWVGPYFV. Residues 33 to 53 traverse the membrane as a helical segment; the sequence is GFFGVSAIFFIFLGVSLIGYA. The Periplasmic segment spans residues 54–83; it reads ASQGPTWDPFAISINPPDLKYGLGAAPLLE. The chain crosses the membrane as a helical span at residues 84–111; the sequence is GGFWQAITVCALGAFISWMLREVEISRK. Residues 112–115 are Cytoplasmic-facing; the sequence is LGIG. A helical membrane pass occupies residues 116 to 139; it reads WHVPLAFCVPIFMFCVLQVFRPLL. The Periplasmic portion of the chain corresponds to 140 to 170; the sequence is LGSWGHAFPYGILSHLDWVNNFGYQYLNWHY. (7R,8Z)-bacteriochlorophyll b is bound by residues histidine 154 and histidine 174. A helical transmembrane segment spans residues 171–198; the sequence is NPGHMSSVSFLFVNAMALGLHGGLILSV. Fe cation is bound at residue histidine 191. Topologically, residues 199 to 225 are cytoplasmic; that stretch reads ANPGDGDKVKTAEHENQYFRDVVGYSI. Phenylalanine 217 lines the a ubiquinone pocket. The helical transmembrane segment at 226–249 threads the bilayer; the sequence is GALSIHRLGLFLASNIFLTGAFGT. Histidine 231 lines the Fe cation pocket. At 250–274 the chain is on the periplasmic side; that stretch reads IASGPFWTRGWPEWWGWWLDIPFWS.

Belongs to the reaction center PufL/M/PsbA/D family. As to quaternary structure, reaction center is composed of four bacteriochlorophylls, two bacteriopheophytins, two ubiquinones, one iron, and three highly hydrophobic polypeptide chains (designated L, M, and H).

The protein localises to the cellular chromatophore membrane. In terms of biological role, the reaction center is a membrane-bound complex that mediates the initial photochemical event in the electron transfer process of photosynthesis. This chain is Reaction center protein L chain (pufL), found in Blastochloris viridis (Rhodopseudomonas viridis).